The primary structure comprises 181 residues: GTPase RhebL1 (181 aa).

Residues 30–36 (LEDYDPT), glycine 61, 117–120 (NKAD), and 147–148 (SA) each bind GTP. The short motif at 33-41 (YDPTVENTY) is the Effector region element. Residue threonine 36 participates in Mg(2+) binding. Cysteine 178 carries the cysteine methyl ester modification. Cysteine 178 carries the S-farnesyl cysteine lipid modification. The propeptide at 179 to 181 (HLM) is removed in mature form.

Belongs to the small GTPase superfamily. Rheb family. In terms of assembly, interacts with MTOR.

It localises to the endomembrane system. Its subcellular location is the cytoplasm. It catalyses the reaction GTP + H2O = GDP + phosphate + H(+). Functionally, binds GTP and exhibits intrinsic GTPase activity. May activate NF-kappa-B-mediated gene transcription. Promotes signal transduction through MTOR, activates RPS6KB1, and is a downstream target of the small GTPase-activating proteins TSC1 and TSC2. This is GTPase RhebL1 (RHEBL1) from Bos taurus (Bovine).